We begin with the raw amino-acid sequence, 322 residues long: tRNA N6-adenosine threonylcarbamoyltransferase (322 aa).

The Fe cation site is built by His109 and His113. Substrate is bound by residues 131 to 135 (LISGG), Asp164, Gly177, Asp181, and Asn277. Asp303 serves as a coordination point for Fe cation.

It belongs to the KAE1 / TsaD family. Fe(2+) is required as a cofactor.

It localises to the cytoplasm. The enzyme catalyses L-threonylcarbamoyladenylate + adenosine(37) in tRNA = N(6)-L-threonylcarbamoyladenosine(37) in tRNA + AMP + H(+). Its function is as follows. Required for the formation of a threonylcarbamoyl group on adenosine at position 37 (t(6)A37) in tRNAs that read codons beginning with adenine. Is involved in the transfer of the threonylcarbamoyl moiety of threonylcarbamoyl-AMP (TC-AMP) to the N6 group of A37, together with TsaE and TsaB. TsaD likely plays a direct catalytic role in this reaction. In Mesomycoplasma hyopneumoniae (strain 232) (Mycoplasma hyopneumoniae), this protein is tRNA N6-adenosine threonylcarbamoyltransferase.